Here is a 417-residue protein sequence, read N- to C-terminus: Tyrosine--tRNA ligase (417 aa).

Position 39 (Tyr-39) interacts with L-tyrosine. The 'HIGH' region motif lies at 44-53 (PTAPSLHAGG). Residues Tyr-176 and Gln-180 each contribute to the L-tyrosine site. A 'KMSKS' region motif is present at residues 236-240 (KMGKS). Lys-239 is an ATP binding site. Positions 350–417 (IGVLALMVLA…KKRHVLIRPA (68 aa)) constitute an S4 RNA-binding domain.

The protein belongs to the class-I aminoacyl-tRNA synthetase family. TyrS type 1 subfamily. As to quaternary structure, homodimer.

Its subcellular location is the cytoplasm. It catalyses the reaction tRNA(Tyr) + L-tyrosine + ATP = L-tyrosyl-tRNA(Tyr) + AMP + diphosphate + H(+). Catalyzes the attachment of tyrosine to tRNA(Tyr) in a two-step reaction: tyrosine is first activated by ATP to form Tyr-AMP and then transferred to the acceptor end of tRNA(Tyr). The protein is Tyrosine--tRNA ligase of Brucella abortus (strain 2308).